The sequence spans 216 residues: Probable GTP-binding protein EngB (216 aa).

An EngB-type G domain is found at 26–200 (EGIEIAFAGR…RAKLDTWFAP (175 aa)). GTP is bound by residues 34–41 (GRSNAGKS), 61–65 (GRTQL), 79–82 (DLPG), 146–149 (TKAD), and 179–181 (YSS). Residues serine 41 and threonine 63 each contribute to the Mg(2+) site.

Belongs to the TRAFAC class TrmE-Era-EngA-EngB-Septin-like GTPase superfamily. EngB GTPase family. Mg(2+) is required as a cofactor.

In terms of biological role, necessary for normal cell division and for the maintenance of normal septation. The protein is Probable GTP-binding protein EngB of Vibrio vulnificus (strain YJ016).